A 288-amino-acid polypeptide reads, in one-letter code: MDLLIALLPALFWGSVVLINVLVGGGPYNQIRGTTFGALIIGIILLLTGNAKFDDLTIIIVGLISGAFWALGQGYQLKSVSLIGVSKTMPISTGLQLVGTTLFSAIFLGEWSTGVQVTLGLVAMVLLVIGIALTSIKGKNEASESSKNFGKAMPILLISTVGYVVYVVVAQIFGVDGMNALFFQSIGMAIGGLILSAKHETSVKSTLWNLIPGIVWGIGNLFMFYSQPKVGVATSFSFSQLLVIVSTLGGIFLLGEKKDKRQMIGIWAGIVLIVIAPLYSEILKHNYN.

10 helical membrane-spanning segments follow: residues 4 to 26, 33 to 51, 56 to 75, 82 to 104, 114 to 136, 148 to 170, 180 to 197, 206 to 225, 230 to 252, and 264 to 283; these read LIAL…VGGG, GTTF…TGNA, LTII…GQGY, LIGV…TLFS, GVQV…LTSI, NFGK…VVVA, ALFF…ILSA, TLWN…FMFY, VGVA…GGIF, and IGIW…SEIL.

It belongs to the GRP transporter (TC 2.A.7.5) family.

It is found in the cell membrane. Involved in the uptake of glucose. The sequence is that of Glucose uptake protein GlcU (glcU) from Staphylococcus xylosus.